We begin with the raw amino-acid sequence, 430 residues long: KICSTOR complex protein kaptin (430 aa).

The segment at 410 to 430 (RKHQQGLGDRVGPRPVEHPAS) is disordered. Residues 420–430 (VGPRPVEHPAS) are compositionally biased toward basic and acidic residues.

As to quaternary structure, part of the KICSTOR complex composed of KPTN, ITFG2, KICS2 and SZT2. SZT2 probably serves as a link between the other three proteins in the KICSTOR complex and mediates the direct interaction with the GATOR1 complex. May associate with F-actin filaments.

The protein resides in the lysosome membrane. Its subcellular location is the cell projection. The protein localises to the lamellipodium. It is found in the stereocilium. Its function is as follows. As part of the KICSTOR complex functions in the amino acid-sensing branch of the TORC1 signaling pathway. Recruits, in an amino acid-independent manner, the GATOR1 complex to the lysosomal membranes and allows its interaction with GATOR2 and the RAG GTPases. Functions upstream of the RAG GTPases and is required to negatively regulate mTORC1 signaling in absence of amino acids. In absence of the KICSTOR complex mTORC1 is constitutively localized to the lysosome and activated. The KICSTOR complex is also probably involved in the regulation of mTORC1 by glucose. The polypeptide is KICSTOR complex protein kaptin (Mus musculus (Mouse)).